Here is a 165-residue protein sequence, read N- to C-terminus: UPF0114 protein in repA1-repA2 intergenic region (165 aa).

A run of 3 helical transmembrane segments spans residues 15–35 (LMFPVYIGLAFGFVLLTVKFF), 53–73 (LVLIVLSLIDIALVGGLLVMV), and 136–156 (IMWCVVIHLTFVLSAFGMAYI).

The protein belongs to the UPF0114 family.

The protein resides in the cell membrane. This is UPF0114 protein in repA1-repA2 intergenic region from Buchnera aphidicola subsp. Thelaxes suberi.